Consider the following 353-residue polypeptide: Peroxidase 34 (353 aa).

The first 30 residues, 1–30 (MHFSSSSTSSTWTILITLGCLMLHASLSAA), serve as a signal peptide directing secretion. Q31 carries the post-translational modification Pyrrolidone carboxylic acid. Disulfide bonds link C41–C121, C74–C79, C127–C331, and C207–C239. An N-linked (GlcNAc...) asparagine glycan is attached at N43. Catalysis depends on H72, which acts as the Proton acceptor. Ca(2+)-binding residues include D73, V76, G78, D80, and S82. N-linked (GlcNAc...) asparagine glycosylation occurs at N87. A substrate-binding site is contributed by P169. H200 lines the heme b pocket. T201 provides a ligand contact to Ca(2+). N-linked (GlcNAc...) asparagine glycans are attached at residues N216, N228, and N244. Ca(2+) is bound by residues D252, T255, and D260. Residue N285 is glycosylated (N-linked (GlcNAc...) asparagine).

The protein belongs to the peroxidase family. Classical plant (class III) peroxidase subfamily. It depends on heme b as a cofactor. Requires Ca(2+) as cofactor. In terms of tissue distribution, preferentially expressed in roots, but also detected in flowers, leaves and stems.

The protein localises to the secreted. It is found in the vacuole. It catalyses the reaction 2 a phenolic donor + H2O2 = 2 a phenolic radical donor + 2 H2O. In terms of biological role, removal of H(2)O(2), oxidation of toxic reductants, biosynthesis and degradation of lignin, suberization, auxin catabolism, response to environmental stresses such as wounding, pathogen attack and oxidative stress. These functions might be dependent on each isozyme/isoform in each plant tissue. Its function is as follows. May be implicated in the systemic acquired resistance response via the salicylic acid signal transduction pathway. Exhibits a Ca(2+)-pectate binding affinity which could be interpreted in vivo as a specificity to interact with the pectic structure of the cell wall. The protein is Peroxidase 34 (PER34) of Arabidopsis thaliana (Mouse-ear cress).